The following is a 1042-amino-acid chain: Elongation factor 3 (1042 aa).

HEAT repeat units follow at residues K9 to T46, P86 to P124, Y167 to N204, D206 to A242, S243 to D280, and P289 to G327. ABC transporter domains are found at residues E425–I642 and C668–E994. The ADP site is built by N704, E923, N926, and H952. The segment at K1009–D1042 is disordered. Positions R1020–K1031 are enriched in basic residues.

It belongs to the ABC transporter superfamily. ABCF family. EF3 subfamily. In terms of assembly, monomer.

Its subcellular location is the cytoplasm. It catalyses the reaction ATP + H2O = ADP + phosphate + H(+). The protein operates within protein biosynthesis; polypeptide chain elongation. Functionally, ribosome-dependent ATPase that functions in cytoplasmic translation elongation. Required for the ATP-dependent release of deacylated tRNA from the ribosomal E-site during protein biosynthesis. Stimulates the eEF1A-dependent binding of aminoacyl-tRNA to the ribosomal A-site, which has reduced affinity for tRNA as long as the E-site is occupied. Assists translation termination by stimulating the release of nascent protein from the ribosome by release factors. The polypeptide is Elongation factor 3 (TEF3) (Pneumocystis carinii).